Here is a 921-residue protein sequence, read N- to C-terminus: Isoleucine--tRNA ligase (921 aa).

A 'HIGH' region motif is present at residues proline 57–histidine 67. Residue glutamate 552 participates in L-isoleucyl-5'-AMP binding. The 'KMSKS' region motif lies at lysine 593–serine 597. Lysine 596 contributes to the ATP binding site. Cysteine 888, cysteine 891, cysteine 908, and cysteine 911 together coordinate Zn(2+).

The protein belongs to the class-I aminoacyl-tRNA synthetase family. IleS type 1 subfamily. In terms of assembly, monomer. Zn(2+) is required as a cofactor.

It localises to the cytoplasm. It catalyses the reaction tRNA(Ile) + L-isoleucine + ATP = L-isoleucyl-tRNA(Ile) + AMP + diphosphate. In terms of biological role, catalyzes the attachment of isoleucine to tRNA(Ile). As IleRS can inadvertently accommodate and process structurally similar amino acids such as valine, to avoid such errors it has two additional distinct tRNA(Ile)-dependent editing activities. One activity is designated as 'pretransfer' editing and involves the hydrolysis of activated Val-AMP. The other activity is designated 'posttransfer' editing and involves deacylation of mischarged Val-tRNA(Ile). The sequence is that of Isoleucine--tRNA ligase from Bacillus cytotoxicus (strain DSM 22905 / CIP 110041 / 391-98 / NVH 391-98).